The chain runs to 489 residues: Hyaluronoglucuronidase (489 aa).

Glu-176 serves as the catalytic Proton donor. The active-site Nucleophile is Glu-290.

This sequence belongs to the glycosyl hydrolase 79 family.

It catalyses the reaction Random hydrolysis of (1-&gt;3)-linkages between beta-D-glucuronate and N-acetyl-D-glucosamine residues in hyaluronate.. With respect to regulation, hyaluronidase activity is inhibited by Mn(2+), Cu(2+) and Fe(3+). Its function is as follows. Hyaluronidase that mediates hydrolysis of (1-&gt;3)-linkages between beta-D-glucuronate and N-acetyl-D-glucosamine residues in hyaluronate. Very specific to hyaluronate: not able to hydrolyze chitin, heparin or chondroitin sulfate. The sequence is that of Hyaluronoglucuronidase from Hirudo nipponia (Korean blood-sucking leech).